The sequence spans 264 residues: Catenin delta-2 (264 aa).

ARM repeat units lie at residues 20 to 59 (NKIK…NLVY), 64 to 104 (DDNK…NLSS), 120 to 162 (LTNA…NVSS), and 166 to 211 (EARR…NLSY). The tract at residues 238–264 (GKDAESSGCWGKKKKKKKSQDQWDGVG) is disordered.

Belongs to the beta-catenin family. As to quaternary structure, binds to E-cadherin at a juxtamembrane site within the cytoplasmic domain. Binds to PSEN1. Interacts with ZBTB33. Interacts with ARHGEF28. Interacts (via the extreme C-terminus) with FRMPD2 (via the PDZ 2 domain). Interacts with PDZD2. Interacts with CDK5. Interacts with CTNBB1. Interacts with GSK3A and GSK3B. Interacts with DNM2. Interacts with CCDC85B. O-glycosylated. Post-translationally, phosphorylated by CDK5. Phosphorylated by GSK3B. In terms of tissue distribution, predominantly expressed in brain; accumulates in cortical neurons (at protein level).

The protein resides in the nucleus. The protein localises to the cell junction. It is found in the adherens junction. It localises to the cell projection. Its subcellular location is the dendrite. The protein resides in the perikaryon. In terms of biological role, has a critical role in neuronal development, particularly in the formation and/or maintenance of dendritic spines and synapses. Involved in the regulation of canonical Wnt signaling. It probably acts on beta-catenin turnover, facilitating beta-catenin interaction with GSK3B, phosphorylation, ubiquitination and degradation. May be involved in neuronal cell adhesion and tissue morphogenesis and integrity by regulating adhesion molecules. Functions as a transcriptional activator when bound to ZBTB33. In Rattus norvegicus (Rat), this protein is Catenin delta-2 (Ctnnd2).